The chain runs to 546 residues: Chaperonin GroEL (546 aa).

ATP is bound by residues 30-33, Lys51, 87-91, Gly415, and Asp495; these read TLGP and DGTTT.

Belongs to the chaperonin (HSP60) family. Forms a cylinder of 14 subunits composed of two heptameric rings stacked back-to-back. Interacts with the co-chaperonin GroES.

It localises to the cytoplasm. It catalyses the reaction ATP + H2O + a folded polypeptide = ADP + phosphate + an unfolded polypeptide.. Functionally, together with its co-chaperonin GroES, plays an essential role in assisting protein folding. The GroEL-GroES system forms a nano-cage that allows encapsulation of the non-native substrate proteins and provides a physical environment optimized to promote and accelerate protein folding. This chain is Chaperonin GroEL, found in Brucella suis (strain ATCC 23445 / NCTC 10510).